Here is a 497-residue protein sequence, read N- to C-terminus: Probable pectinesterase 30 (497 aa).

The signal sequence occupies residues 1 to 21; sequence MLVKVFSFFILMIIMVIGVSK. 2 N-linked (GlcNAc...) asparagine glycosylation sites follow: Asn238 and Asn254. Thr263 contacts substrate. Asp316 (proton donor) is an active-site residue. Cys330 and Cys350 are joined by a disulfide. Residue Asp337 is the Nucleophile of the active site. A glycan (N-linked (GlcNAc...) asparagine) is linked at Asn385. 2 residues coordinate substrate: Arg403 and Trp405.

The protein belongs to the pectinesterase family. As to expression, expressed in siliques.

It localises to the secreted. It is found in the cell wall. It catalyses the reaction [(1-&gt;4)-alpha-D-galacturonosyl methyl ester](n) + n H2O = [(1-&gt;4)-alpha-D-galacturonosyl](n) + n methanol + n H(+). It functions in the pathway glycan metabolism; pectin degradation; 2-dehydro-3-deoxy-D-gluconate from pectin: step 1/5. Acts in the modification of cell walls via demethylesterification of cell wall pectin. The polypeptide is Probable pectinesterase 30 (PME30) (Arabidopsis thaliana (Mouse-ear cress)).